We begin with the raw amino-acid sequence, 587 residues long: Aspartate--tRNA ligase (587 aa).

Glu-174 serves as a coordination point for L-aspartate. An aspartate region spans residues 198 to 201 (QITK). Arg-220 serves as a coordination point for L-aspartate. Residues 220 to 222 (RDE) and Gln-229 contribute to the ATP site. His-443 lines the L-aspartate pocket. An ATP-binding site is contributed by Glu-477. Position 484 (Arg-484) interacts with L-aspartate. 529 to 532 (GLDR) is an ATP binding site.

Belongs to the class-II aminoacyl-tRNA synthetase family. Type 1 subfamily. As to quaternary structure, homodimer.

It is found in the cytoplasm. It catalyses the reaction tRNA(Asp) + L-aspartate + ATP = L-aspartyl-tRNA(Asp) + AMP + diphosphate. Functionally, catalyzes the attachment of L-aspartate to tRNA(Asp) in a two-step reaction: L-aspartate is first activated by ATP to form Asp-AMP and then transferred to the acceptor end of tRNA(Asp). The chain is Aspartate--tRNA ligase from Streptococcus pneumoniae (strain 70585).